The following is a 263-amino-acid chain: N-glycosylase/DNA lyase (263 aa).

The 8-oxoguanine site is built by Gln43, Ser71, and Trp82. The interval 139-204 (RRYYFENMMG…EDVRIKAYTE (66 aa)) is helix-hairpin-helix. Lys164 (schiff-base intermediate with DNA) is an active-site residue. Positions 168 and 194 each coordinate 8-oxoguanine. The active site involves Asp196. 8-oxoguanine contacts are provided by Asp230 and Trp234.

The protein belongs to the archaeal N-glycosylase/DNA lyase (AGOG) family.

It carries out the reaction 2'-deoxyribonucleotide-(2'-deoxyribose 5'-phosphate)-2'-deoxyribonucleotide-DNA = a 3'-end 2'-deoxyribonucleotide-(2,3-dehydro-2,3-deoxyribose 5'-phosphate)-DNA + a 5'-end 5'-phospho-2'-deoxyribonucleoside-DNA + H(+). Its function is as follows. DNA repair enzyme that is part of the base excision repair (BER) pathway; protects from oxidative damage by removing the major product of DNA oxidation, 8-oxoguanine (GO), from single- and double-stranded DNA substrates. The protein is N-glycosylase/DNA lyase of Thermococcus kodakarensis (strain ATCC BAA-918 / JCM 12380 / KOD1) (Pyrococcus kodakaraensis (strain KOD1)).